Consider the following 1039-residue polypeptide: Multidrug resistance protein MdtB (1039 aa).

12 consecutive transmembrane segments (helical) span residues 16–36 (FILRPVATTLLMVAILLAGII), 342–362 (DVQFELLLAVALVVMVIYVFL), 373–393 (VAVPLSLIGTFAAMYFLGFSI), 396–416 (LTLMALTIATGFVVDDAIVVI), 440–460 (IGFTIISLTFSLVAVLIPLLF), 472–492 (FAVTLAVAILISAVVSLTLTP), 537–557 (WLTLGVAFSTLLLTVLLYLLI), 863–883 (LGGTLWLILAAVVAMYIVLGV), 888–908 (FIHPVTILSTLPTAGVGALLA), 911–931 (MAGSELDVIAIIGIILLIGIV), 968–988 (ILMTTLAALLGALPLMLSTGV), and 1002–1022 (GGLVMSQILTLFTTPVIYLLF).

The protein belongs to the resistance-nodulation-cell division (RND) (TC 2.A.6) family. MdtB subfamily. In terms of assembly, part of a tripartite efflux system composed of MdtA, MdtB and MdtC. MdtB forms a heteromultimer with MdtC.

Its subcellular location is the cell inner membrane. The sequence is that of Multidrug resistance protein MdtB from Serratia proteamaculans (strain 568).